Here is an 86-residue protein sequence, read N- to C-terminus: Serine protease inhibitor Kazal-type 4 (86 aa).

An N-terminal signal peptide occupies residues 1-26 (MAMHLWLVTLTLVPLLGMDRELMVSA). The 56-residue stretch at 31-86 (FPRMPFCEHMAELPNCPQTPNLICGTDGLTYENECHLCLTRMKTMKDIQIMKDGQC) folds into the Kazal-like domain. 3 cysteine pairs are disulfide-bonded: cysteine 37–cysteine 68, cysteine 46–cysteine 65, and cysteine 54–cysteine 86.

In terms of tissue distribution, expressed in the intestinal tract.

It is found in the secreted. The protein is Serine protease inhibitor Kazal-type 4 (Spink4) of Mus musculus (Mouse).